The sequence spans 503 residues: Maturase K (503 aa).

This sequence belongs to the intron maturase 2 family. MatK subfamily.

The protein localises to the plastid. Its subcellular location is the chloroplast. Functionally, usually encoded in the trnK tRNA gene intron. Probably assists in splicing its own and other chloroplast group II introns. In Liquidambar orientalis (Oriental sweet gum), this protein is Maturase K.